Reading from the N-terminus, the 324-residue chain is Virulence-associated V antigen (324 aa).

Its subcellular location is the secreted. In terms of biological role, possibly involved in calcium regulation of YOP expression, which includes the export process. In Yersinia pestis (strain Pestoides F), this protein is Virulence-associated V antigen (lcrV).